Reading from the N-terminus, the 320-residue chain is Cytochrome f (320 aa).

The N-terminal stretch at 1–35 (MQNRNTFSWIKEQMTRSISVSIMIYVITRTAISNA) is a signal peptide. Residues Tyr36, Cys56, Cys59, and His60 each contribute to the heme site. Residues 286 to 306 (VQGLLFFLASVILAQIFLVLK) traverse the membrane as a helical segment.

It belongs to the cytochrome f family. As to quaternary structure, the 4 large subunits of the cytochrome b6-f complex are cytochrome b6, subunit IV (17 kDa polypeptide, petD), cytochrome f and the Rieske protein, while the 4 small subunits are PetG, PetL, PetM and PetN. The complex functions as a dimer. Heme serves as cofactor.

The protein resides in the plastid. It is found in the chloroplast thylakoid membrane. Functionally, component of the cytochrome b6-f complex, which mediates electron transfer between photosystem II (PSII) and photosystem I (PSI), cyclic electron flow around PSI, and state transitions. The sequence is that of Cytochrome f from Platanus occidentalis (Sycamore).